The chain runs to 414 residues: Gamma-glutamyl phosphate reductase (414 aa).

This sequence belongs to the gamma-glutamyl phosphate reductase family.

Its subcellular location is the cytoplasm. It catalyses the reaction L-glutamate 5-semialdehyde + phosphate + NADP(+) = L-glutamyl 5-phosphate + NADPH + H(+). Its pathway is amino-acid biosynthesis; L-proline biosynthesis; L-glutamate 5-semialdehyde from L-glutamate: step 2/2. Functionally, catalyzes the NADPH-dependent reduction of L-glutamate 5-phosphate into L-glutamate 5-semialdehyde and phosphate. The product spontaneously undergoes cyclization to form 1-pyrroline-5-carboxylate. The protein is Gamma-glutamyl phosphate reductase of Alkaliphilus metalliredigens (strain QYMF).